A 432-amino-acid chain; its full sequence is Peptidase B (432 aa).

Lys-196 and Asp-201 together coordinate Mn(2+). Lys-208 is an active-site residue. The Mn(2+) site is built by Asp-219, Asp-278, and Glu-280. Residue Arg-282 is part of the active site.

This sequence belongs to the peptidase M17 family. Homohexamer. It depends on Mn(2+) as a cofactor.

It localises to the cytoplasm. The catalysed reaction is Release of an N-terminal amino acid, Xaa, from a peptide or arylamide. Xaa is preferably Glu or Asp but may be other amino acids, including Leu, Met, His, Cys and Gln.. In terms of biological role, probably plays an important role in intracellular peptide degradation. In Vibrio vulnificus (strain CMCP6), this protein is Peptidase B.